A 780-amino-acid chain; its full sequence is Ribonucleoside-diphosphate reductase large subunit (780 aa).

Substrate is bound by residues Thr177, 192 to 193 (SC), Gly223, 393 to 397 (NLCAE), and 595 to 599 (PTVGS). A disulfide bridge links Cys193 with Cys409. Asn393 acts as the Proton acceptor in catalysis. The Cysteine radical intermediate role is filled by Cys395. The active-site Proton acceptor is Glu397.

This sequence belongs to the ribonucleoside diphosphate reductase large chain family. In terms of assembly, heterotetramer composed of a homodimer of the large subunit (R1) and a homodimer of the small subunit (R2). Larger multisubunit protein complex are also active, composed of (R1)n(R2)n.

It catalyses the reaction a 2'-deoxyribonucleoside 5'-diphosphate + [thioredoxin]-disulfide + H2O = a ribonucleoside 5'-diphosphate + [thioredoxin]-dithiol. In terms of biological role, ribonucleoside-diphosphate reductase holoenzyme provides the precursors necessary for viral DNA synthesis. Allows virus growth in non-dividing cells, as well as reactivation from latency in infected hosts. Catalyzes the biosynthesis of deoxyribonucleotides from the corresponding ribonucleotides. This is Ribonucleoside-diphosphate reductase large subunit from Connochaetes taurinus (Blue wildebeest).